Consider the following 236-residue polypeptide: Auxin-responsive protein IAA13 (236 aa).

Disordered regions lie at residues 1 to 24, 52 to 93, and 105 to 130; these read MAGA…GGAA, EAAA…WPPV, and SVKS…GSNS. The short motif at 12 to 16 is the EAR-like (transcriptional repression) element; the sequence is LRLGL. The segment covering 52 to 61 has biased composition (low complexity); the sequence is EAAAGKAEAP. Positions 62-81 are enriched in basic and acidic residues; the sequence is AAEKAKRPAEAAAADAEKPP. The segment covering 117–130 has biased composition (low complexity); that stretch reads QQQQPAANASGSNS. Residues 131 to 218 enclose the PB1 domain; it reads SAFVKVSMDG…SCKRLRIMKG (88 aa).

Belongs to the Aux/IAA family. As to quaternary structure, homodimers and heterodimers.

The protein localises to the nucleus. Aux/IAA proteins are short-lived transcriptional factors that function as repressors of early auxin response genes at low auxin concentrations. The protein is Auxin-responsive protein IAA13 (IAA13) of Oryza sativa subsp. japonica (Rice).